The sequence spans 257 residues: Leucine-rich repeat-containing protein 3 (257 aa).

The N-terminal stretch at 1 to 32 is a signal peptide; that stretch reads MGPRGRQSPSATLAPSQGSCFFILFCLRLGAS. One can recognise an LRRNT domain in the interval 33 to 64; sequence CPQACQCPDHAGAVAVHCSSRGLQEIPRDIPA. LRR repeat units lie at residues 65-86, 89-110, and 114-135; these read DTVLLKLDANRISRVPNGAFQH, QLRELDLSHNAIEAIGPAAFSG, and GLRLLDLSHNRIRRIPKDALGK. An LRRCT domain is found at 145–198; the sequence is NPLHCECALQEALWELKLDPDSVDEIACHTSAQEQFVGKPLIQVLDSGASFCST. A helical membrane pass occupies residues 205–225; it reads VAMLVTMFGWFTMVIAYVVYY.

The protein belongs to the LRRC3 family.

It is found in the membrane. This is Leucine-rich repeat-containing protein 3 (Lrrc3) from Mus musculus (Mouse).